Reading from the N-terminus, the 1019-residue chain is Sca1 complex protein phr (1019 aa).

Disordered stretches follow at residues 89–118 (IVINSSSSSSSSSSHHPHHQKTPSNSSSNF), 131–202 (AFNN…INNN), 265–287 (QQLNQNGGSNNGSTSNSTSNSAN), and 512–546 (STNNNNSGNNSNNNNGNSNGNSSNNNSNNNSTNNL). Residues 93-102 (SSSSSSSSSS) are compositionally biased toward low complexity. Over residues 141–155 (NRKEKEKDKDKDHQD) the composition is skewed to basic and acidic residues. Positions 158–188 (NINNINNINNNINNNINNNNNNNNNNNNNNN) form a coiled coil. Positions 158–202 (NINNINNINNNINNNINNNNNNNNNNNNNNNMHNPTSSSPSINNN) are enriched in low complexity. The region spanning 735–836 (EIKKKGYLFK…WIKAIKFNCF (102 aa)) is the PH domain. Positions 860–872 (VAGSGSNNGNNNG) are enriched in low complexity. Disordered stretches follow at residues 860–890 (VAGSGSNNGNNNGHLKRSDTTQQLNNSGSFI), 904–951 (NLSI…QQQL), and 977–1019 (SSYT…SKLK). A compositionally biased stretch (polar residues) spans 879–890 (TTQQLNNSGSFI). Over residues 977–986 (SSYTDSMSGS) the composition is skewed to low complexity. The segment covering 987–1019 (PPDSNGQVFPQSPQLKKTLFQRTTSFSKGSKLK) has biased composition (polar residues).

Component of the Sca1 complex composed of at least gefA, gefH, scaA, phr, and the protein phosphatase 2A subunits pppA and pho2B. Interacts directly with gefH.

Its subcellular location is the cell membrane. Its function is as follows. Component of the Sca1 complex, a regulator of cell motility, chemotaxis and signal relay. The Sca1 complex is recruited to the plasma membrane in a chemoattractant- and F-actin-dependent manner and is enriched at the leading edge of chemotaxing cells where it regulates F-actin dynamics and signal relay by controlling the activation of rasC and the downstream target of rapamycin complex 2 (TORC2)-Akt/protein kinase B (PKB) pathway. This chain is Sca1 complex protein phr, found in Dictyostelium discoideum (Social amoeba).